The sequence spans 303 residues: ATP synthase gamma chain (303 aa).

The protein belongs to the ATPase gamma chain family. As to quaternary structure, F-type ATPases have 2 components, CF(1) - the catalytic core - and CF(0) - the membrane proton channel. CF(1) has five subunits: alpha(3), beta(3), gamma(1), delta(1), epsilon(1). CF(0) has three main subunits: a, b and c.

It is found in the cell inner membrane. In terms of biological role, produces ATP from ADP in the presence of a proton gradient across the membrane. The gamma chain is believed to be important in regulating ATPase activity and the flow of protons through the CF(0) complex. The polypeptide is ATP synthase gamma chain (Bartonella henselae (strain ATCC 49882 / DSM 28221 / CCUG 30454 / Houston 1) (Rochalimaea henselae)).